Reading from the N-terminus, the 951-residue chain is Zinc fingers and homeoboxes protein 3 (951 aa).

Residues 1 to 66 (MASKRKSTTP…SSTDGSALAN (66 aa)) are disordered. A required for nuclear localization region spans residues 1-107 (MASKRKSTTP…SEHTDFNKDP (107 aa)). A compositionally biased stretch (low complexity) spans 42 to 58 (PSEAPDASSEAAPNPSS). 2 C2H2-type zinc fingers span residues 77–100 (YCCKECEFRSQDVTHFIGHMNSEH) and 109–132 (FVCTGCSFLAKNPEGLSLHNAKCH). The disordered stretch occupies residues 227–252 (TFINGAAPGSQASAKSTKPPPAANGP). Residues 238–483 (ASAKSTKPPP…LLTACPSITS (246 aa)) form a required for homodimerization and interaction with NFYA region. The interval 299 to 497 (LSSIPTYNAA…DANIYKNKKS (199 aa)) is required for repressor activity. DNA-binding regions (homeobox) lie at residues 300 to 359 (SSIP…GISW) and 489 to 548 (ANIY…RNLK). Residues 492–550 (YKNKKSHEQLSALKGSFCRNQFPGQSEVEHLTKVTGLSTREVRKWFSDRRYHCRNLKGS) are required for nuclear localization. S599 carries the phosphoserine modification. The homeobox 3 DNA-binding region spans 607–666 (TPTKYKERAPEQLRVLENSFAQNPLPPEEELDRLRSETKMTRREIDGWFSERRKKVNTEE). The segment covering 662 to 676 (VNTEETKKADGHMPK) has biased composition (basic and acidic residues). The segment at 662-690 (VNTEETKKADGHMPKEEEEGAEQEGRDEE) is disordered. A compositionally biased stretch (acidic residues) spans 677–690 (EEEEGAEQEGRDEE). Phosphoserine is present on residues S703 and S718. DNA-binding regions (homeobox) lie at residues 759 to 818 (PSKV…KNGQ) and 830 to 889 (FPPG…TRAV). The tract at residues 916–951 (SELSENSESWEPSAPEASSEPFDTSSPQSGRQLEAD) is disordered. Positions 919 to 936 (SENSESWEPSAPEASSEP) are enriched in low complexity. Phosphoserine occurs at positions 922 and 941. Polar residues predominate over residues 937–951 (FDTSSPQSGRQLEAD).

Belongs to the ZHX family. In terms of assembly, homodimer (via homeobox domain 1). Heterodimer with ZHX1 (via homeobox domain 1). Heterodimer with ZHX2 (via homeobox domain 1). Heterodimerization with ZHX1 is a prerequisite for repressor activity. Interacts with NFYA. In terms of tissue distribution, ubiquitously expressed.

Its subcellular location is the nucleus. Its function is as follows. Acts as a transcriptional repressor. Involved in the early stages of mesenchymal stem cell (MSC) osteogenic differentiation. Is a regulator of podocyte gene expression during primary glomerula disease. Binds to promoter DNA. The protein is Zinc fingers and homeoboxes protein 3 (Zhx3) of Mus musculus (Mouse).